The chain runs to 177 residues: Large ribosomal subunit protein uL6 (177 aa).

Belongs to the universal ribosomal protein uL6 family. Part of the 50S ribosomal subunit.

In terms of biological role, this protein binds to the 23S rRNA, and is important in its secondary structure. It is located near the subunit interface in the base of the L7/L12 stalk, and near the tRNA binding site of the peptidyltransferase center. This is Large ribosomal subunit protein uL6 from Xanthobacter autotrophicus (strain ATCC BAA-1158 / Py2).